Here is a 648-residue protein sequence, read N- to C-terminus: SRSF protein kinase 1 (648 aa).

The segment at 1–57 is disordered; it reads MERKVLALQARKKRTKAKKDKAQRKPETQHRGSAPHSESDIPEQEEEILGSDDDEQE. The span at 10-22 shows a compositional bias: basic residues; that stretch reads ARKKRTKAKKDKA. Residues 40–57 are compositionally biased toward acidic residues; the sequence is DIPEQEEEILGSDDDEQE. Ser-51 is subject to Phosphoserine. A Protein kinase domain is found at 80–646; it reads YHVIRKLGWG…AAECLRHPWL (567 aa). Residues 86 to 94 and Lys-109 each bind ATP; that span reads LGWGHFSTV. Asp-213 (proton acceptor) is an active-site residue. 2 disordered regions span residues 238 to 354 and 395 to 464; these read WQRS…APEI and PSFL…DSKG. Residues 265 to 276 show a composition bias toward basic residues; it reads KNKKKKLKKKQK. Composition is skewed to basic and acidic residues over residues 277-288 and 304-317; these read RQAELLEKRMQE and NKQEESESPVDRPL. Residues Ser-309, Ser-311, and Ser-333 each carry the phosphoserine modification. Polar residues-rich tracts occupy residues 333–343 and 396–441; these read SNSIGQDQTLT and SFLN…TQLE. Phosphothreonine is present on Thr-448. At Ser-450 the chain carries Phosphoserine. At Ser-548 the chain carries Phosphoserine; by CK2.

This sequence belongs to the protein kinase superfamily. CMGC Ser/Thr protein kinase family. Monomer. Found in a multisubunit complex containing seven proteins, named toposome, which separates entangled circular chromatin DNA during chromosome segregation. Interacts with HHV-1 ICP27 protein. Interacts with DNAJC8 and AHSA1/AHA1 and this mediates formation of a complex with the Hsp70 /Hsp90 machinery. Binds to IGF2BP1, SYNCRIP, HNRNPA2B1 and HNRNPC. Interacts with SAFB/SAFB1 and SAFB2 which inhibits its activity. Mg(2+) is required as a cofactor. As to expression, predominantly expressed in the testis but is also present at lower levels in heart, spleen, liver, brain, kidney, lung and skeletal muscle. Present in all germinal cells in the seminiferous tubules but not in mature spermatozoa.

It localises to the cytoplasm. It is found in the nucleus. The protein localises to the nucleoplasm. The protein resides in the nucleus matrix. Its subcellular location is the microsome. It localises to the nucleus speckle. It is found in the chromosome. It catalyses the reaction L-seryl-[protein] + ATP = O-phospho-L-seryl-[protein] + ADP + H(+). It carries out the reaction L-threonyl-[protein] + ATP = O-phospho-L-threonyl-[protein] + ADP + H(+). With respect to regulation, activated by phosphorylation on Ser-51 and Ser-548. In terms of biological role, serine/arginine-rich protein-specific kinase which specifically phosphorylates its substrates at serine residues located in regions rich in arginine/serine dipeptides, known as RS domains and is involved in the phosphorylation of SR splicing factors and the regulation of splicing. Plays a central role in the regulatory network for splicing, controlling the intranuclear distribution of splicing factors in interphase cells and the reorganization of nuclear speckles during mitosis. Can influence additional steps of mRNA maturation, as well as other cellular activities, such as chromatin reorganization in somatic and sperm cells and cell cycle progression. Phosphorylates SFRS2, ZRSR2, LBR and PRM1. Phosphorylates SRSF1 using a directional (C-terminal to N-terminal) and a dual-track mechanism incorporating both processive phosphorylation (in which the kinase stays attached to the substrate after each round of phosphorylation) and distributive phosphorylation steps (in which the kinase and substrate dissociate after each phosphorylation event). The RS domain of SRSF1 binds first to a docking groove in the large lobe of the kinase domain of SRPK1. This induces certain structural changes in SRPK1 and/or RRM2 domain of SRSF1, allowing RRM2 to bind the kinase and initiate phosphorylation. The cycles continue for several phosphorylation steps in a processive manner (steps 1-8) until the last few phosphorylation steps (approximately steps 9-12). During that time, a mechanical stress induces the unfolding of the beta-4 motif in RRM2, which then docks at the docking groove of SRPK1. This also signals RRM2 to begin to dissociate, which facilitates SRSF1 dissociation after phosphorylation is completed. Can mediate hepatitis B virus (HBV) core protein phosphorylation. It plays a negative role in the regulation of HBV replication through a mechanism not involving the phosphorylation of the core protein but by reducing the packaging efficiency of the pregenomic RNA (pgRNA) without affecting the formation of the viral core particles. Can induce splicing of exon 10 in MAPT/TAU. This chain is SRSF protein kinase 1, found in Mus musculus (Mouse).